The sequence spans 404 residues: Probable eukaryotic initiation factor 4A (404 aa).

The segment at M1 to F28 is disordered. The Q motif signature appears at P26–Q54. Residues I57 to I231 enclose the Helicase ATP-binding domain. A70–T77 serves as a coordination point for ATP. Positions D179–D182 match the DEAD box motif. Positions G242–L402 constitute a Helicase C-terminal domain.

This sequence belongs to the DEAD box helicase family. eIF4A subfamily. As to quaternary structure, eIF4F is a multi-subunit complex, the composition of which varies with external and internal environmental conditions. It is composed of at least EIF4A, EIF4E and EIF4G.

It catalyses the reaction ATP + H2O = ADP + phosphate + H(+). ATP-dependent RNA helicase which is a subunit of the eIF4F complex involved in cap recognition and is required for mRNA binding to ribosome. In the current model of translation initiation, eIF4A unwinds RNA secondary structures in the 5'-UTR of mRNAs which is necessary to allow efficient binding of the small ribosomal subunit, and subsequent scanning for the initiator codon. This Trypanosoma brucei brucei (strain 927/4 GUTat10.1) protein is Probable eukaryotic initiation factor 4A.